Here is a 207-residue protein sequence, read N- to C-terminus: Large ribosomal subunit protein uL3 (207 aa).

Positions 126-149 (GPASHGSKKWHRRPGSIGQRKTPG) are disordered.

Belongs to the universal ribosomal protein uL3 family. In terms of assembly, part of the 50S ribosomal subunit. Forms a cluster with proteins L14 and L19.

In terms of biological role, one of the primary rRNA binding proteins, it binds directly near the 3'-end of the 23S rRNA, where it nucleates assembly of the 50S subunit. The protein is Large ribosomal subunit protein uL3 of Deinococcus geothermalis (strain DSM 11300 / CIP 105573 / AG-3a).